We begin with the raw amino-acid sequence, 806 residues long: Cell cycle progression protein 1 (806 aa).

The Cytoplasmic segment spans residues 1–216; that stretch reads MSENSSDSDS…KRQFSSGLNK (216 aa). Positions 1–307 are interaction with MCF2L and SRC; the sequence is MSENSSDSDS…QKTNLATENQ (307 aa). Disordered stretches follow at residues 80-105 and 152-207; these read SSTIEAEEEKIPEDNIYIGTASDDSD and VFSS…KESK. A compositionally biased stretch (basic residues) spans 175-184; that stretch reads FRRRRARKKT. Ser186 carries the post-translational modification Phosphoserine. Over residues 190 to 207 the composition is skewed to basic and acidic residues; that stretch reads SEDRLVAEQETEPSKESK. Residues 217–237 traverse the membrane as a helical; Signal-anchor for type II membrane protein segment; sequence CVILALVIAVSMGFGHFYGTI. The Lumenal segment spans residues 238-806; sequence QIQKRQQLVR…LGQLPFDPQY (569 aa). A coiled-coil region spans residues 305–449; that stretch reads ENQYLRVSLE…EQQRSDLWER (145 aa). Positions 457–467 are enriched in basic and acidic residues; that stretch reads QSGKQETDGKK. Residues 457 to 478 form a disordered region; sequence QSGKQETDGKKKVGRGNHRAKN. Over residues 468-478 the composition is skewed to basic residues; it reads KVGRGNHRAKN. Residues 503 to 529 adopt a coiled-coil conformation; the sequence is VRHHKEKIKQAKEAVKENLKKFSDSVK. A disordered region spans residues 758-778; the sequence is SRHRKQEQKHLQPQPYKREGK.

It belongs to the CCPG1 family. Interacts with MCF2L. May interact with MCF2, ARHGEF1, BCR, VAV1 and FGD1, but not with TIAM1. Interacts with GTP-bound CDC42 and SRC.

The protein resides in the cytoplasmic granule membrane. Functionally, acts as an assembly platform for Rho protein signaling complexes. Limits guanine nucleotide exchange activity of MCF2L toward RHOA, which results in an inhibition of both its transcriptional activation ability and its transforming activity. Does not inhibit activity of MCF2L toward CDC42, or activity of MCF2 toward either RHOA or CDC42. May be involved in cell cycle regulation. This chain is Cell cycle progression protein 1 (CCPG1), found in Pongo abelii (Sumatran orangutan).